Reading from the N-terminus, the 556-residue chain is Arginine--tRNA ligase (556 aa).

Positions 132–142 match the 'HIGH' region motif; sequence ANPTGDLHLGH.

It belongs to the class-I aminoacyl-tRNA synthetase family. Monomer.

It localises to the cytoplasm. It catalyses the reaction tRNA(Arg) + L-arginine + ATP = L-arginyl-tRNA(Arg) + AMP + diphosphate. The protein is Arginine--tRNA ligase of Shouchella clausii (strain KSM-K16) (Alkalihalobacillus clausii).